A 305-amino-acid chain; its full sequence is Serine/threonine-protein phosphatase 6 catalytic subunit (305 aa).

An N-acetylmethionine modification is found at methionine 1. The Mn(2+) site is built by aspartate 53, histidine 55, aspartate 81, and asparagine 113. Histidine 114 acts as the Proton donor in catalysis. Mn(2+)-binding residues include histidine 163 and histidine 237.

This sequence belongs to the PPP phosphatase family. PP-6 (PP-V) subfamily. As to quaternary structure, protein phosphatase 6 (PP6) holoenzyme is proposed to be a heterotrimeric complex formed by the catalytic subunit, a SAPS domain-containing subunit (PP6R) and an ankyrin repeat-domain containing regulatory subunit (ARS). Interacts with subunits PPP6R1, PPP6R2 and PPP6R3. Interacts with subunit ANKRD28. Interacts with IGBP1. Interacts with MAP3K7. Interacts with NFKBIE. Interacts with TRIM14 and WRNIP1; these interactions positively regulate the RIG-I signaling pathway. It depends on Mn(2+) as a cofactor. Ubiquitously expressed in all tissues tested with strongest expression in lung, spleen, liver, kidney and brain. Weaker expression observed in bladder, pancreas, heart and skeletal muscle.

Its subcellular location is the mitochondrion. It localises to the cytoplasm. It carries out the reaction O-phospho-L-seryl-[protein] + H2O = L-seryl-[protein] + phosphate. The catalysed reaction is O-phospho-L-threonyl-[protein] + H2O = L-threonyl-[protein] + phosphate. Its function is as follows. Catalytic subunit of protein phosphatase 6 (PP6). PP6 is a component of a signaling pathway regulating cell cycle progression in response to IL2 receptor stimulation. N-terminal domain restricts G1 to S phase progression in cancer cells, in part through control of cyclin D13 During mitosis, regulates spindle positioning. Down-regulates MAP3K7 kinase activation of the IL1 signaling pathway by dephosphorylation of MAP3K7. Acts as a regulator of innate immunity by mediating dephosphorylation CGAS, STING1 and RIGI. Also participates in the innate immune defense against viruses by desphosphorylating RIGI, an essential step that triggers RIGI-mediated signaling activation. Also regulates innate immunity by acting as a negative regulator of the cGAS-STING pathway: mediates dephosphorylation and inactivation of CGAS and STING1. CGAS dephosphorylation at 'Ser-420' impairs its ability to bind GTP, thereby inactivating it. The polypeptide is Serine/threonine-protein phosphatase 6 catalytic subunit (Mus musculus (Mouse)).